The sequence spans 125 residues: Small ribosomal subunit protein uS13 (125 aa).

A disordered region spans residues Arg92 to Lys125. Positions Arg107–Lys125 are enriched in basic residues.

Belongs to the universal ribosomal protein uS13 family. Part of the 30S ribosomal subunit. Forms a loose heterodimer with protein S19. Forms two bridges to the 50S subunit in the 70S ribosome.

Located at the top of the head of the 30S subunit, it contacts several helices of the 16S rRNA. In the 70S ribosome it contacts the 23S rRNA (bridge B1a) and protein L5 of the 50S subunit (bridge B1b), connecting the 2 subunits; these bridges are implicated in subunit movement. Contacts the tRNAs in the A and P-sites. The chain is Small ribosomal subunit protein uS13 from Chlorobium phaeobacteroides (strain BS1).